The following is a 333-amino-acid chain: 4-hydroxy-3-methylbut-2-enyl diphosphate reductase (333 aa).

A [4Fe-4S] cluster-binding site is contributed by Cys-34. Residues His-63 and His-96 each coordinate (2E)-4-hydroxy-3-methylbut-2-enyl diphosphate. Residues His-63 and His-96 each contribute to the dimethylallyl diphosphate site. Isopentenyl diphosphate is bound by residues His-63 and His-96. Residue Cys-118 coordinates [4Fe-4S] cluster. His-146 contacts (2E)-4-hydroxy-3-methylbut-2-enyl diphosphate. A dimethylallyl diphosphate-binding site is contributed by His-146. His-146 serves as a coordination point for isopentenyl diphosphate. Glu-148 acts as the Proton donor in catalysis. Position 186 (Thr-186) interacts with (2E)-4-hydroxy-3-methylbut-2-enyl diphosphate. Residue Cys-216 participates in [4Fe-4S] cluster binding. Residues Ser-244, Ser-245, Asn-246, and Ser-289 each coordinate (2E)-4-hydroxy-3-methylbut-2-enyl diphosphate. Residues Ser-244, Ser-245, Asn-246, and Ser-289 each coordinate dimethylallyl diphosphate. Isopentenyl diphosphate contacts are provided by Ser-244, Ser-245, Asn-246, and Ser-289.

It belongs to the IspH family. [4Fe-4S] cluster serves as cofactor.

It carries out the reaction isopentenyl diphosphate + 2 oxidized [2Fe-2S]-[ferredoxin] + H2O = (2E)-4-hydroxy-3-methylbut-2-enyl diphosphate + 2 reduced [2Fe-2S]-[ferredoxin] + 2 H(+). The enzyme catalyses dimethylallyl diphosphate + 2 oxidized [2Fe-2S]-[ferredoxin] + H2O = (2E)-4-hydroxy-3-methylbut-2-enyl diphosphate + 2 reduced [2Fe-2S]-[ferredoxin] + 2 H(+). It participates in isoprenoid biosynthesis; dimethylallyl diphosphate biosynthesis; dimethylallyl diphosphate from (2E)-4-hydroxy-3-methylbutenyl diphosphate: step 1/1. Its pathway is isoprenoid biosynthesis; isopentenyl diphosphate biosynthesis via DXP pathway; isopentenyl diphosphate from 1-deoxy-D-xylulose 5-phosphate: step 6/6. Catalyzes the conversion of 1-hydroxy-2-methyl-2-(E)-butenyl 4-diphosphate (HMBPP) into a mixture of isopentenyl diphosphate (IPP) and dimethylallyl diphosphate (DMAPP). Acts in the terminal step of the DOXP/MEP pathway for isoprenoid precursor biosynthesis. This is 4-hydroxy-3-methylbut-2-enyl diphosphate reductase from Mycolicibacterium gilvum (strain PYR-GCK) (Mycobacterium gilvum (strain PYR-GCK)).